The sequence spans 359 residues: Alanine racemase (359 aa).

The Proton acceptor; specific for D-alanine role is filled by lysine 34. Residue lysine 34 is modified to N6-(pyridoxal phosphate)lysine. Residue arginine 129 coordinates substrate. The active-site Proton acceptor; specific for L-alanine is tyrosine 254. Methionine 302 contacts substrate.

Belongs to the alanine racemase family. It depends on pyridoxal 5'-phosphate as a cofactor.

It catalyses the reaction L-alanine = D-alanine. It functions in the pathway amino-acid biosynthesis; D-alanine biosynthesis; D-alanine from L-alanine: step 1/1. Its function is as follows. Catalyzes the interconversion of L-alanine and D-alanine. May also act on other amino acids. The protein is Alanine racemase (alr) of Yersinia pestis.